The sequence spans 199 residues: WASH complex subunit 3 (199 aa).

Residues 47–76 adopt a coiled-coil conformation; sequence VCEEKLSALSLRIQQIETTLNILEAKLSSI. Residues 93-120 are compositionally biased toward polar residues; sequence NISNGHLPSQPDAQSVVVSPQSDNNSMN. 2 disordered regions span residues 93–136 and 170–199; these read NISN…NITT and PDLL…SFSD. Residues 183-192 show a composition bias toward acidic residues; it reads GEPEAEESSD.

The protein belongs to the CCDC53 family. Component of the WASH complex.

The polypeptide is WASH complex subunit 3 (Xenopus laevis (African clawed frog)).